A 670-amino-acid chain; its full sequence is MAMSDEAMFAPPQGITIEAVNGMLAERLAQKHGKASLLRAFIPLPPPFSPVQLIELHVLKSNFYYRYHDDGSDVTATTEYQGEMVDYSRHAVLLGSSGMAELRFIRTHGSRFTSQDCTLFNWLARIITPVLQSWLNDEEQQVALRLLEKDRDHHRVLVDITNAVLSHLDLDDLIADVAREIHHFFGLASVSMVLGDHRKNEKFSLWCSDLSASHCACLPRCMPGESVLLTQTLQTRQPTLTHRADDLFLWQRDPLLLLLASNGCESALLIPLTFGNHTPGALLLAHTSSTLFSEENCQLLQHIADRIAIAVGNADAWRSMTDLQESLQQENHQLSEQLLSNLGIGDIIYQSQAMEDLLQQVDIVAKSDSTVLICGETGTGKEVIARAIHQLSPRRDKPLVKINCAAIPASLLESELFGHDKGAFTGAINTHRGRFEIADGGTLFLDEIGDLPLELQPKLLRVLQEREIERLGGSRTIPVNVRVIAATNRDLWQMVEDRQFRSDLFYRLNVFPLELPPLRDRPEDIPLLAKHFTQKMARHMNRAIDAIPTEALRQLMSWDWPGNVRELENVIERAVLLTRGNSLNLHLNVRQSRLLPTLNEDSALRSSMAQLLHPTTPENDEEERQRIVQVLRETNGIVAGPRGAATRLGMKRTTLLSRMQRLGISVREVL.

Positions 169–311 constitute a GAF domain; that stretch reads DLDDLIADVA…HIADRIAIAV (143 aa). A Cys-rich segment, might bind a metal cluster motif is present at residues 207-221; that stretch reads CSDLSASHCACLPRC. The 230-residue stretch at 347 to 576 folds into the Sigma-54 factor interaction domain; that stretch reads IIYQSQAMED…LENVIERAVL (230 aa). ATP is bound by residues 375 to 382 and 438 to 447; these read GETGTGKE and ADGGTLFLDE. Residues 641–660 constitute a DNA-binding region (H-T-H motif); sequence PRGAATRLGMKRTTLLSRMQ.

In terms of biological role, a transcriptional activator of its own operon; when overexpressed operon expression is strongly enhanced by low pH (under pH 6.0), strongly inhibited by O(2) but only weakly stimulated by fumarate. Expression in situ is very weak. The protein is DNA-binding transcriptional activator HyfR of Escherichia coli (strain K12).